Here is a 131-residue protein sequence, read N- to C-terminus: Ribosome-binding factor A (131 aa).

The protein belongs to the RbfA family. In terms of assembly, monomer. Binds 30S ribosomal subunits, but not 50S ribosomal subunits or 70S ribosomes.

Its subcellular location is the cytoplasm. Its function is as follows. One of several proteins that assist in the late maturation steps of the functional core of the 30S ribosomal subunit. Associates with free 30S ribosomal subunits (but not with 30S subunits that are part of 70S ribosomes or polysomes). Required for efficient processing of 16S rRNA. May interact with the 5'-terminal helix region of 16S rRNA. This Mannheimia succiniciproducens (strain KCTC 0769BP / MBEL55E) protein is Ribosome-binding factor A.